The following is a 377-amino-acid chain: MLDYLKIRRDLHQIPEIGLEEYKTHAYLMQVIEGLTADLDFVEIRTWRTGILVFIKGSSPYKTIGWRTDIDGLPIVEETGLDFASTHEGRMHACGHDMHMTVALGLLEQALSAQPNHNLLFLFQPAEENEAGGMLMYEDGAFGDWLPDEFYGLHVRPDLKVGDIATNRGTLFAGTCEVKLTFKGKGGHAAFPHEANDALIAASYFITQVQTIVSRNVDPIEGAVVTFGSLHAGTTNNVIAETAFLHGTIRTLTQEMNLLTQKRLREIAEGIAQSFDLELDLELKQGGYLPVENHPDLAGELMDFFQKEDGVELIDIAPAMTGEDFGYLLSKVKGVMFWMGVDSPYALHHPKMTPDEAALPFAIEKIGKFLDYKVNER.

Aspartate 69 is a catalytic residue. Glutamate 128 serves as the catalytic Proton acceptor.

It belongs to the peptidase M20A family. N-acetyldiaminopimelate deacetylase subfamily.

It carries out the reaction N-acetyl-(2S,6S)-2,6-diaminopimelate + H2O = (2S,6S)-2,6-diaminopimelate + acetate. Its pathway is amino-acid biosynthesis; L-lysine biosynthesis via DAP pathway; LL-2,6-diaminopimelate from (S)-tetrahydrodipicolinate (acetylase route): step 3/3. In terms of biological role, catalyzes the conversion of N-acetyl-diaminopimelate to diaminopimelate and acetate. The chain is N-acetyldiaminopimelate deacetylase from Streptococcus gordonii (strain Challis / ATCC 35105 / BCRC 15272 / CH1 / DL1 / V288).